Reading from the N-terminus, the 358-residue chain is Methylthioribose-1-phosphate isomerase (358 aa).

Substrate is bound by residues 54 to 56, Arg96, and Gln205; that span reads RGA. Asp246 acts as the Proton donor in catalysis. 256-257 provides a ligand contact to substrate; sequence SK.

Belongs to the eIF-2B alpha/beta/delta subunits family. MtnA subfamily.

The catalysed reaction is 5-(methylsulfanyl)-alpha-D-ribose 1-phosphate = 5-(methylsulfanyl)-D-ribulose 1-phosphate. It participates in amino-acid biosynthesis; L-methionine biosynthesis via salvage pathway; L-methionine from S-methyl-5-thio-alpha-D-ribose 1-phosphate: step 1/6. Catalyzes the interconversion of methylthioribose-1-phosphate (MTR-1-P) into methylthioribulose-1-phosphate (MTRu-1-P). This chain is Methylthioribose-1-phosphate isomerase, found in Pseudomonas putida (strain GB-1).